A 517-amino-acid polypeptide reads, in one-letter code: Beta-glucosidase 1 (517 aa).

The N-terminal stretch at 1 to 22 is a signal peptide; sequence MEDVLTLITMIVLLLLAFHGFG. A beta-D-glucoside-binding positions include Gln48, His145, and 190 to 191; that span reads NE. The active-site Proton donor is Glu191. A disulfide bridge connects residues Cys210 and Cys217. Asn216 and Asn221 each carry an N-linked (GlcNAc...) asparagine glycan. The a beta-D-glucoside site is built by Tyr333 and Glu406. Glu406 functions as the Nucleophile in the catalytic mechanism. Asn441 carries an N-linked (GlcNAc...) asparagine glycan. 2 residues coordinate a beta-D-glucoside: Trp451 and Phe467. Residues Asn473 and Asn512 are each glycosylated (N-linked (GlcNAc...) asparagine).

This sequence belongs to the glycosyl hydrolase 1 family.

It carries out the reaction Hydrolysis of terminal, non-reducing beta-D-glucosyl residues with release of beta-D-glucose.. The polypeptide is Beta-glucosidase 1 (Arabidopsis thaliana (Mouse-ear cress)).